A 258-amino-acid polypeptide reads, in one-letter code: Acetylglutamate kinase (258 aa).

Residues 41–42 (GG), arginine 63, and asparagine 156 contribute to the substrate site.

Belongs to the acetylglutamate kinase family. ArgB subfamily.

The protein resides in the cytoplasm. The enzyme catalyses N-acetyl-L-glutamate + ATP = N-acetyl-L-glutamyl 5-phosphate + ADP. It functions in the pathway amino-acid biosynthesis; L-arginine biosynthesis; N(2)-acetyl-L-ornithine from L-glutamate: step 2/4. Catalyzes the ATP-dependent phosphorylation of N-acetyl-L-glutamate. This Bacillus amyloliquefaciens (Bacillus velezensis) protein is Acetylglutamate kinase.